Reading from the N-terminus, the 250-residue chain is Ubiquinone/menaquinone biosynthesis C-methyltransferase UbiE (250 aa).

Residues Thr-74, Asp-94, 122-123, and Ser-139 contribute to the S-adenosyl-L-methionine site; that span reads DA.

This sequence belongs to the class I-like SAM-binding methyltransferase superfamily. MenG/UbiE family.

The catalysed reaction is a 2-demethylmenaquinol + S-adenosyl-L-methionine = a menaquinol + S-adenosyl-L-homocysteine + H(+). It catalyses the reaction a 2-methoxy-6-(all-trans-polyprenyl)benzene-1,4-diol + S-adenosyl-L-methionine = a 5-methoxy-2-methyl-3-(all-trans-polyprenyl)benzene-1,4-diol + S-adenosyl-L-homocysteine + H(+). The protein operates within quinol/quinone metabolism; menaquinone biosynthesis; menaquinol from 1,4-dihydroxy-2-naphthoate: step 2/2. Its pathway is cofactor biosynthesis; ubiquinone biosynthesis. Its function is as follows. Methyltransferase required for the conversion of demethylmenaquinol (DMKH2) to menaquinol (MKH2) and the conversion of 2-polyprenyl-6-methoxy-1,4-benzoquinol (DDMQH2) to 2-polyprenyl-3-methyl-6-methoxy-1,4-benzoquinol (DMQH2). In Roseobacter denitrificans (strain ATCC 33942 / OCh 114) (Erythrobacter sp. (strain OCh 114)), this protein is Ubiquinone/menaquinone biosynthesis C-methyltransferase UbiE.